The primary structure comprises 92 residues: Large ribosomal subunit protein bL27 (92 aa).

The propeptide occupies 1–9 (MIKANLQLF).

Belongs to the bacterial ribosomal protein bL27 family. The N-terminus is cleaved by ribosomal processing cysteine protease Prp.

This is Large ribosomal subunit protein bL27 from Acetivibrio thermocellus (strain ATCC 27405 / DSM 1237 / JCM 9322 / NBRC 103400 / NCIMB 10682 / NRRL B-4536 / VPI 7372) (Clostridium thermocellum).